Consider the following 564-residue polypeptide: DNA ligase B (564 aa).

Lys-130 acts as the N6-AMP-lysine intermediate in catalysis.

The protein belongs to the NAD-dependent DNA ligase family. LigB subfamily.

The enzyme catalyses NAD(+) + (deoxyribonucleotide)n-3'-hydroxyl + 5'-phospho-(deoxyribonucleotide)m = (deoxyribonucleotide)n+m + AMP + beta-nicotinamide D-nucleotide.. Functionally, catalyzes the formation of phosphodiester linkages between 5'-phosphoryl and 3'-hydroxyl groups in double-stranded DNA using NAD as a coenzyme and as the energy source for the reaction. The sequence is that of DNA ligase B from Klebsiella pneumoniae subsp. pneumoniae (strain ATCC 700721 / MGH 78578).